A 402-amino-acid polypeptide reads, in one-letter code: S-adenosylmethionine synthase (402 aa).

Histidine 15 serves as a coordination point for ATP. Aspartate 17 provides a ligand contact to Mg(2+). Glutamate 43 lines the K(+) pocket. Residues glutamate 56 and glutamine 99 each coordinate L-methionine. The interval 99-109 (QSPDIAQGVDT) is flexible loop. Residues 174–176 (DGK), 247–248 (RF), aspartate 256, 262–263 (RK), alanine 279, and lysine 283 each bind ATP. Aspartate 256 contributes to the L-methionine binding site. Lysine 287 serves as a coordination point for L-methionine.

It belongs to the AdoMet synthase family. In terms of assembly, homotetramer; dimer of dimers. Requires Mg(2+) as cofactor. The cofactor is K(+).

The protein localises to the cytoplasm. It carries out the reaction L-methionine + ATP + H2O = S-adenosyl-L-methionine + phosphate + diphosphate. Its pathway is amino-acid biosynthesis; S-adenosyl-L-methionine biosynthesis; S-adenosyl-L-methionine from L-methionine: step 1/1. Catalyzes the formation of S-adenosylmethionine (AdoMet) from methionine and ATP. The overall synthetic reaction is composed of two sequential steps, AdoMet formation and the subsequent tripolyphosphate hydrolysis which occurs prior to release of AdoMet from the enzyme. This chain is S-adenosylmethionine synthase, found in Streptomyces coelicolor (strain ATCC BAA-471 / A3(2) / M145).